A 340-amino-acid polypeptide reads, in one-letter code: Protein RecA (340 aa).

Position 65 to 72 (65 to 72) interacts with ATP; sequence GPESGGKT.

It belongs to the RecA family.

Its subcellular location is the cytoplasm. In terms of biological role, can catalyze the hydrolysis of ATP in the presence of single-stranded DNA, the ATP-dependent uptake of single-stranded DNA by duplex DNA, and the ATP-dependent hybridization of homologous single-stranded DNAs. It interacts with LexA causing its activation and leading to its autocatalytic cleavage. This Thermus thermophilus protein is Protein RecA.